A 533-amino-acid polypeptide reads, in one-letter code: Frizzled/smoothened-like sans CRD protein H (533 aa).

An N-terminal signal peptide occupies residues 1–21; sequence MFIKFYFFIIFLILNFKNNYA. The Extracellular portion of the chain corresponds to 22-103; sequence SPTLLDSVLS…GDWTTMMDMS (82 aa). Asn76 is a glycosylation site (N-linked (GlcNAc...) asparagine). The chain crosses the membrane as a helical span at residues 104-124; sequence LIVATISFFASIFLILTYSPL. Residues 125-134 are Cytoplasmic-facing; sequence MNPSYNNRHT. The chain crosses the membrane as a helical span at residues 135–155; the sequence is IGILSMSFGIFLIMFTDMYNL. Residues 156–177 are Extracellular-facing; the sequence is KKRFTLGCPSETRYAIQNDADC. Residues 178-198 traverse the membrane as a helical segment; the sequence is LITGLIFQFGCVSAVFFWTAL. Residues 199-216 lie on the Cytoplasmic side of the membrane; it reads SLDLYFQITNRNISRKYD. Residues 217-237 traverse the membrane as a helical segment; sequence LYYFIGVNLISLIFTFVPVIS. The Extracellular segment spans residues 238-259; that stretch reads KSYGYGDFALGCWILDFNYALG. Residues 260-280 form a helical membrane-spanning segment; that stretch reads CFWIPLSVCLIFSTVVVLMIL. Residues 281–302 lie on the Cytoplasmic side of the membrane; sequence YEVYKIYKASNQKTSLKGHIKP. The chain crosses the membrane as a helical span at residues 303–323; the sequence is LLCLISNCFEFFYVFGYSLYL. Over 324–360 the chain is Extracellular; sequence ATKLTELHDNMDAYIKCLFLNSQNDPDSYTCPDHRLK. The helical transmembrane segment at 361–381 threads the bilayer; sequence LGPQFLFFLSLRLLGVSGIVF. Residues 382–533 are Cytoplasmic-facing; it reads YGTNSKVRKI…LTNINTIDNV (152 aa). Residues 454–533 form a disordered region; that stretch reads IIVTPGGDDD…LTNINTIDNV (80 aa). Residues 466–518 show a composition bias toward low complexity; the sequence is NNNNNNNNNNNNNNNNNNNNNNNNNNNNNNNNNNNNNNNNNNNNNSNENNENN. Residues 501 to 528 adopt a coiled-coil conformation; that stretch reads NNNNNNNNNNSNENNENNTQEIELTNIN. Positions 519-533 are enriched in polar residues; sequence TQEIELTNINTIDNV.

This sequence belongs to the G-protein coupled receptor Fz/Smo family.

The protein localises to the membrane. In Dictyostelium discoideum (Social amoeba), this protein is Frizzled/smoothened-like sans CRD protein H (fscH).